The sequence spans 334 residues: Ethanol acetyltransferase 1 (334 aa).

The transit peptide at 1–16 (MFASNVVVLNKRSIRF) directs the protein to the mitochondrion. Residues S124, D148, and H296 each act as charge relay system in the active site.

It belongs to the AB hydrolase superfamily.

The protein localises to the mitochondrion. The enzyme catalyses ethanol + acetyl-CoA = ethyl acetate + CoA. The catalysed reaction is acetyl-CoA + H2O = acetate + CoA + H(+). It carries out the reaction ethyl acetate + H2O = ethanol + acetate + H(+). In terms of biological role, alcohol acetyltransferase that catalyzes the synthesis of ethyl acetate from ethanol and acetyl-CoA. Can also function as a thioesterase by hydrolyzing acetyl-CoA in the absence of ethanol, as well as esterase hydrolyzing ethyl acetate. This Hanseniaspora uvarum (Yeast) protein is Ethanol acetyltransferase 1 (EAT1).